Reading from the N-terminus, the 180-residue chain is Bifunctional bis(5'-adenosyl)-triphosphatase/adenylylsulfatase FHIT (180 aa).

One can recognise an HIT domain in the interval 27-134; sequence SYAFGPYKID…LPRKGGDFEK (108 aa). Substrate is bound by residues asparagine 52 and glutamine 108. A Histidine triad motif motif is present at residues 119 to 123; it reads HVHIH. The active-site Tele-AMP-histidine intermediate is the histidine 121. Histidine 123 is a substrate binding site.

The enzyme catalyses P(1),P(3)-bis(5'-adenosyl) triphosphate + H2O = AMP + ADP + 2 H(+). It carries out the reaction adenosine 5'-phosphosulfate + H2O = sulfate + AMP + 2 H(+). It catalyses the reaction adenosine 5'-phosphosulfate + NH4(+) = adenosine 5'-phosphoramidate + sulfate + 2 H(+). The catalysed reaction is adenosine 5'-phosphoramidate + H2O = AMP + NH4(+). Its function is as follows. Possesses dinucleoside triphosphate hydrolase activity. Cleaves P(1)-P(3)-bis(5'-adenosyl) triphosphate (Ap3A) to yield AMP and ADP. Exhibits adenylylsulfatase activity, hydrolyzing adenosine 5'-phosphosulfate to yield AMP and sulfate. Exhibits adenosine 5'-monophosphoramidase activity, hydrolyzing purine nucleotide phosphoramidates with a single phosphate group such as adenosine 5'monophosphoramidate (AMP-NH2) to yield AMP and NH2. Exhibits adenylylsulfate-ammonia adenylyltransferase, catalyzing the ammonolysis of adenosine 5'-phosphosulfate resulting in the formation of adenosine 5'-phosphoramidate. The polypeptide is Bifunctional bis(5'-adenosyl)-triphosphatase/adenylylsulfatase FHIT (Arabidopsis thaliana (Mouse-ear cress)).